A 659-amino-acid chain; its full sequence is Threonine--tRNA ligase (659 aa).

A TGS domain is found at 1-61 (MIDLIFPDGS…TPDLLGGGNR (61 aa)). Residues 249-541 (DHRKLGKTMD…LLENYAGHLP (293 aa)) form a catalytic region. Zn(2+) is bound by residues Cys-341, His-392, and His-518. A disordered region spans residues 637–659 (EEATPPDLARDRAVAAPAELAQA).

The protein belongs to the class-II aminoacyl-tRNA synthetase family. In terms of assembly, homodimer. It depends on Zn(2+) as a cofactor.

It is found in the cytoplasm. It carries out the reaction tRNA(Thr) + L-threonine + ATP = L-threonyl-tRNA(Thr) + AMP + diphosphate + H(+). Its function is as follows. Catalyzes the attachment of threonine to tRNA(Thr) in a two-step reaction: L-threonine is first activated by ATP to form Thr-AMP and then transferred to the acceptor end of tRNA(Thr). Also edits incorrectly charged L-seryl-tRNA(Thr). This is Threonine--tRNA ligase from Caulobacter sp. (strain K31).